The primary structure comprises 242 residues: MSKSRLTVFSFVRRFLLRLMVVLAIFWGGGIALFSVAPVPFSAVMVERQVSAWLHGNFRYVAHSDWVSMDQISPWMGLAVIAAEDQKFPEHWGFDVASIEQALAHNERNENRIRGASTISQQTAKNLFLWDGRSWVRKGLEAGLTLGIETVWSKKRILAVYLNIAEFGDGVFGVEAAAQRYFHKPASKLTRSEAALLAAVLPNPLRFKVSAPSGYVRSRQAWILRQMYQLGGEPFMQQHQLD.

A helical membrane pass occupies residues 19–39 (LMVVLAIFWGGGIALFSVAPV).

The protein belongs to the glycosyltransferase 51 family.

The protein resides in the cell inner membrane. It carries out the reaction [GlcNAc-(1-&gt;4)-Mur2Ac(oyl-L-Ala-gamma-D-Glu-L-Lys-D-Ala-D-Ala)](n)-di-trans,octa-cis-undecaprenyl diphosphate + beta-D-GlcNAc-(1-&gt;4)-Mur2Ac(oyl-L-Ala-gamma-D-Glu-L-Lys-D-Ala-D-Ala)-di-trans,octa-cis-undecaprenyl diphosphate = [GlcNAc-(1-&gt;4)-Mur2Ac(oyl-L-Ala-gamma-D-Glu-L-Lys-D-Ala-D-Ala)](n+1)-di-trans,octa-cis-undecaprenyl diphosphate + di-trans,octa-cis-undecaprenyl diphosphate + H(+). Its pathway is cell wall biogenesis; peptidoglycan biosynthesis. In terms of biological role, peptidoglycan polymerase that catalyzes glycan chain elongation from lipid-linked precursors. This is Biosynthetic peptidoglycan transglycosylase from Escherichia coli O81 (strain ED1a).